The following is a 75-amino-acid chain: Disintegrin CTF-II (75 aa).

The 75-residue stretch at Glu1–Leu75 folds into the Disintegrin domain. Disulfide bonds link Cys9-Cys24, Cys11-Cys19, Cys18-Cys41, Cys32-Cys38, Cys37-Cys62, and Cys50-Cys69. A Cell attachment site motif is present at residues Arg54 to Asp56.

The protein belongs to the venom metalloproteinase (M12B) family. P-II subfamily. P-IIa sub-subfamily. As to quaternary structure, monomer (disintegrin). In terms of tissue distribution, expressed by the venom gland.

The protein localises to the secreted. Inhibits fibrinogen interaction with platelet receptors, and inhibits aggregation induced by ADP, thrombin, collagen and platelet-activating factor. Acts by binding to the alpha-IIb/beta-3 (ITGA2B/ITGB3) on the platelet surface. This Protobothrops flavoviridis (Habu) protein is Disintegrin CTF-II.